The chain runs to 299 residues: Peroxisomal biogenesis factor 19 (299 aa).

The segment at 1 to 61 is disordered; it reads MAAAEEGCGV…KRAPGDTAKD (61 aa). Residue A2 is modified to N-acetylalanine. The tract at residues 2–56 is docking to the peroxisome membrane and binding to PEX3; that stretch reads AAAEEGCGVGVEDDRELEELLESALDDFDKAKPSPEHAPTISAPDASGPQKRAPG. Residues 2–91 form a necessary for PEX19 function on peroxisome biogenesis region; the sequence is AAAEEGCGVG…QATAEFEKAM (90 aa). Residues 12 to 27 are compositionally biased toward acidic residues; it reads VEDDRELEELLESALD. Residues S35 and S66 each carry the phosphoserine modification. Phosphothreonine is present on T236. C296 carries the post-translational modification Cysteine methyl ester. A lipid anchor (S-farnesyl cysteine) is attached at C296. A propeptide spans 297 to 299 (removed in mature form); the sequence is LIM.

It belongs to the peroxin-19 family. Interacts with a broad range of peroxisomal membrane proteins, including PEX3, PEX10, PEX11A, PEX11B, PEX12, PEX13, PEX14 and PEX16, PXMP2/PMP22, PXMP4/PMP24, SLC25A17/PMP34, ABCD1/ALDP, ABCD2/ALDRP, and ABCD3/PMP70. Also interacts with the tumor suppressor CDKN2A/p19ARF.

Its subcellular location is the cytoplasm. The protein localises to the peroxisome membrane. Necessary for early peroxisomal biogenesis. Acts both as a cytosolic chaperone and as an import receptor for peroxisomal membrane proteins (PMPs). Binds and stabilizes newly synthesized PMPs in the cytoplasm by interacting with their hydrophobic membrane-spanning domains, and targets them to the peroxisome membrane by binding to the integral membrane protein PEX3. Excludes CDKN2A from the nucleus and prevents its interaction with MDM2, which results in active degradation of TP53. The sequence is that of Peroxisomal biogenesis factor 19 (Pex19) from Mus musculus (Mouse).